The sequence spans 504 residues: Cytochrome P450 71B7 (504 aa).

The chain crosses the membrane as a helical span at residues 1–21 (MSILLCFLCLLPVFLVSLSIL). Lys-82 is covalently cross-linked (Glycyl lysine isopeptide (Lys-Gly) (interchain with G-Cter in ubiquitin)). Cys-446 serves as a coordination point for heme.

This sequence belongs to the cytochrome P450 family. Heme serves as cofactor. Highly expressed in rosette leaves. Also expressed in roots, leaves, flowers, and siliques.

Its subcellular location is the membrane. In Arabidopsis thaliana (Mouse-ear cress), this protein is Cytochrome P450 71B7 (CYP71B7).